A 296-amino-acid polypeptide reads, in one-letter code: Nitrogenase iron protein 2 (296 aa).

11-18 (GKGGIGKS) serves as a coordination point for ATP. C99 serves as a coordination point for [4Fe-4S] cluster. Position 102 is an ADP-ribosylarginine; by dinitrogenase reductase ADP-ribosyltransferase (R102). C133 lines the [4Fe-4S] cluster pocket.

This sequence belongs to the NifH/BchL/ChlL family. In terms of assembly, homodimer. [4Fe-4S] cluster serves as cofactor. The reversible ADP-ribosylation of Arg-102 inactivates the nitrogenase reductase and regulates nitrogenase activity.

The enzyme catalyses N2 + 8 reduced [2Fe-2S]-[ferredoxin] + 16 ATP + 16 H2O = H2 + 8 oxidized [2Fe-2S]-[ferredoxin] + 2 NH4(+) + 16 ADP + 16 phosphate + 6 H(+). Its function is as follows. The key enzymatic reactions in nitrogen fixation are catalyzed by the nitrogenase complex, which has 2 components: the iron protein and the molybdenum-iron protein. This Azorhizobium caulinodans (strain ATCC 43989 / DSM 5975 / JCM 20966 / LMG 6465 / NBRC 14845 / NCIMB 13405 / ORS 571) protein is Nitrogenase iron protein 2 (nifH2).